We begin with the raw amino-acid sequence, 234 residues long: Urease subunit alpha (234 aa).

The segment at 1-102 is urease gamma; that stretch reads MKLTPKELDK…LVTIHTPVEA (102 aa). A urease beta region spans residues 103–234; it reads GSDKLAPGEV…GTINCGCDNK (132 aa).

The protein in the N-terminal section; belongs to the urease gamma subunit family. In the C-terminal section; belongs to the urease beta subunit family. As to quaternary structure, heterohexamer of 3 UreA (alpha) and 3 UreB (beta) subunits.

Its subcellular location is the cytoplasm. It catalyses the reaction urea + 2 H2O + H(+) = hydrogencarbonate + 2 NH4(+). It participates in nitrogen metabolism; urea degradation; CO(2) and NH(3) from urea (urease route): step 1/1. The chain is Urease subunit alpha from Helicobacter heilmannii.